Reading from the N-terminus, the 347-residue chain is Aspartate-semialdehyde dehydrogenase (347 aa).

NADP(+) contacts are provided by residues 13–16 and 41–42; these read TGAV and RS. Position 101 (R101) interacts with phosphate. C132 (acyl-thioester intermediate) is an active-site residue. Residue Q159 participates in substrate binding. NADP(+) is bound at residue 162-163; it reads SG. Phosphate is bound at residue K216. R238 contacts substrate. The Proton acceptor role is filled by H245. Position 319 (N319) interacts with NADP(+).

This sequence belongs to the aspartate-semialdehyde dehydrogenase family. As to quaternary structure, homodimer.

The enzyme catalyses L-aspartate 4-semialdehyde + phosphate + NADP(+) = 4-phospho-L-aspartate + NADPH + H(+). The protein operates within amino-acid biosynthesis; L-lysine biosynthesis via DAP pathway; (S)-tetrahydrodipicolinate from L-aspartate: step 2/4. It functions in the pathway amino-acid biosynthesis; L-methionine biosynthesis via de novo pathway; L-homoserine from L-aspartate: step 2/3. It participates in amino-acid biosynthesis; L-threonine biosynthesis; L-threonine from L-aspartate: step 2/5. In terms of biological role, catalyzes the NADPH-dependent formation of L-aspartate-semialdehyde (L-ASA) by the reductive dephosphorylation of L-aspartyl-4-phosphate. The sequence is that of Aspartate-semialdehyde dehydrogenase from Legionella pneumophila.